The chain runs to 330 residues: MKIAIDAMGGDHAPKAVVLGAMKAIKEYSDLHITLVGKEEEIRQYLTSDERITILHTDEKIESTEEPVRAVRRKKQASMVLAAQQVKDGEADACISAGSTGALMAAGLFVVGRMEGIERPALSPTMPTVDGKGFVMLDVGANVDAKPIHLYQYAVMGSVYAEKVRGIENPRVGLLNVGTEDGKGNELSKQVFAMLKDAPINFVGNVESRDLLQGVADVVVCDGFTGNVALKSLEGTALALFSMLKEQLMSSFTSKLAAAVLKPKLMVLKDKMDYSEYGGAALFGLKAPVIKAHGSSNDQSIFSAIRQTREMVAKEVIPTISSVMEKESLQ.

This sequence belongs to the PlsX family. In terms of assembly, homodimer. Probably interacts with PlsY.

It localises to the cytoplasm. The enzyme catalyses a fatty acyl-[ACP] + phosphate = an acyl phosphate + holo-[ACP]. It functions in the pathway lipid metabolism; phospholipid metabolism. Functionally, catalyzes the reversible formation of acyl-phosphate (acyl-PO(4)) from acyl-[acyl-carrier-protein] (acyl-ACP). This enzyme utilizes acyl-ACP as fatty acyl donor, but not acyl-CoA. The polypeptide is Phosphate acyltransferase (Bacillus cereus (strain G9842)).